The following is a 76-amino-acid chain: Translational regulator CsrA (76 aa).

It belongs to the CsrA/RsmA family. As to quaternary structure, homodimer; the beta-strands of each monomer intercalate to form a hydrophobic core, while the alpha-helices form wings that extend away from the core.

It localises to the cytoplasm. Its function is as follows. A translational regulator that binds mRNA to regulate translation initiation and/or mRNA stability. Usually binds in the 5'-UTR at or near the Shine-Dalgarno sequence preventing ribosome-binding, thus repressing translation. Its main target seems to be the major flagellin gene, while its function is anatagonized by FliW. The sequence is that of Translational regulator CsrA from Syntrophomonas wolfei subsp. wolfei (strain DSM 2245B / Goettingen).